The primary structure comprises 421 residues: Gamma-glutamyl phosphate reductase (421 aa).

Belongs to the gamma-glutamyl phosphate reductase family.

It is found in the cytoplasm. The enzyme catalyses L-glutamate 5-semialdehyde + phosphate + NADP(+) = L-glutamyl 5-phosphate + NADPH + H(+). The protein operates within amino-acid biosynthesis; L-proline biosynthesis; L-glutamate 5-semialdehyde from L-glutamate: step 2/2. Its function is as follows. Catalyzes the NADPH-dependent reduction of L-glutamate 5-phosphate into L-glutamate 5-semialdehyde and phosphate. The product spontaneously undergoes cyclization to form 1-pyrroline-5-carboxylate. The chain is Gamma-glutamyl phosphate reductase from Leifsonia xyli subsp. xyli (strain CTCB07).